We begin with the raw amino-acid sequence, 189 residues long: UPF0340 protein SAG0103 (189 aa).

This sequence belongs to the UPF0340 family.

The chain is UPF0340 protein SAG0103 from Streptococcus agalactiae serotype V (strain ATCC BAA-611 / 2603 V/R).